The following is a 408-amino-acid chain: Histidine--tRNA ligase (408 aa).

This sequence belongs to the class-II aminoacyl-tRNA synthetase family. In terms of assembly, homodimer.

It localises to the cytoplasm. The enzyme catalyses tRNA(His) + L-histidine + ATP = L-histidyl-tRNA(His) + AMP + diphosphate + H(+). This chain is Histidine--tRNA ligase, found in Campylobacter lari (strain RM2100 / D67 / ATCC BAA-1060).